The following is a 474-amino-acid chain: Bifunctional protein HldE (474 aa).

Residues 1 to 318 (MKLSMPRFDQ…RAVQREQGSE (318 aa)) are ribokinase. 194–197 (NLSE) contributes to the ATP binding site. Residue aspartate 263 is part of the active site. A cytidylyltransferase region spans residues 343-474 (FTNGCFDILH…AIVEKIRQKG (132 aa)).

The protein in the N-terminal section; belongs to the carbohydrate kinase PfkB family. This sequence in the C-terminal section; belongs to the cytidylyltransferase family. Homodimer.

The enzyme catalyses D-glycero-beta-D-manno-heptose 7-phosphate + ATP = D-glycero-beta-D-manno-heptose 1,7-bisphosphate + ADP + H(+). The catalysed reaction is D-glycero-beta-D-manno-heptose 1-phosphate + ATP + H(+) = ADP-D-glycero-beta-D-manno-heptose + diphosphate. Its pathway is nucleotide-sugar biosynthesis; ADP-L-glycero-beta-D-manno-heptose biosynthesis; ADP-L-glycero-beta-D-manno-heptose from D-glycero-beta-D-manno-heptose 7-phosphate: step 1/4. It functions in the pathway nucleotide-sugar biosynthesis; ADP-L-glycero-beta-D-manno-heptose biosynthesis; ADP-L-glycero-beta-D-manno-heptose from D-glycero-beta-D-manno-heptose 7-phosphate: step 3/4. Its function is as follows. Catalyzes the phosphorylation of D-glycero-D-manno-heptose 7-phosphate at the C-1 position to selectively form D-glycero-beta-D-manno-heptose-1,7-bisphosphate. Functionally, catalyzes the ADP transfer from ATP to D-glycero-beta-D-manno-heptose 1-phosphate, yielding ADP-D-glycero-beta-D-manno-heptose. The protein is Bifunctional protein HldE of Pseudomonas aeruginosa (strain UCBPP-PA14).